Reading from the N-terminus, the 499-residue chain is MPQSMTNAFWHNFLGHTPNWYKKTILGFLVINIVLSQVSPFLAGWALIIEFIFTLAMALKCYPLQPGGLLAIQAVLLGLTSADSVYHEVLANFKVILLLMFMVAGIYFMKDMLLFVFTKILLGIRSKLLLSLLFSFVAAVLSAFLDALTVTAVLIAVAVGFYAVYHRFASGSGHGNDHDHSADDNVHDLHREDLDTFRSFLRSLIMHGAVGTALGGVATLVGEPQNLLIAEIAGWNFIEFYLVMAPISVPALIGGLLTCAILEKTGICGYGAKLPDSVRQILVDFDKKETAKRGFGDKAQLLVQAVVAVVLVFALALHLAEVGLIGLLIIVLLTAFNGITDEHRIGHAFEEALPFTALLVVFFAVVAVIHDQHLFTPVIDYVLAMEQGAQAPMFFVANGVLSMISDNVFVATVYINEVKAAFDAGTISREHFDVLAVAINAGTNLPSVATPNGQAAFLFLLTSALAPLIRLSYGKMVIMALPYTIVLGAVGLGSVILFY.

Helical transmembrane passes span 38–58, 62–82, 89–109, 128–148, 149–169, 204–224, 242–262, 310–330, 349–369, 393–413, 449–469, and 478–498; these read VSPFLAGWALIIEFIFTLAMA, YPLQPGGLLAIQAVLLGLTSA, VLANFKVILLLMFMVAGIYFM, LLLSLLFSFVAAVLSAFLDAL, TVTAVLIAVAVGFYAVYHRFA, LIMHGAVGTALGGVATLVGEP, LVMAPISVPALIGGLLTCAIL, VLVFALALHLAEVGLIGLLII, FEEALPFTALLVVFFAVVAVI, MFFVANGVLSMISDNVFVATV, ATPNGQAAFLFLLTSALAPLI, and IMALPYTIVLGAVGLGSVILF.

This sequence belongs to the NhaB Na(+)/H(+) (TC 2.A.34) antiporter family.

The protein localises to the cell inner membrane. The catalysed reaction is 2 Na(+)(in) + 3 H(+)(out) = 2 Na(+)(out) + 3 H(+)(in). Functionally, na(+)/H(+) antiporter that extrudes sodium in exchange for external protons. This is Na(+)/H(+) antiporter NhaB from Saccharophagus degradans (strain 2-40 / ATCC 43961 / DSM 17024).